The primary structure comprises 451 residues: Vacuolar cation/proton exchanger 1a (451 aa).

The Cytoplasmic portion of the chain corresponds to 1–58; sequence MEAAAAMEAGRKLAARHPHGRSRTAHNMSSSSLRKKSDAALVRKVPVAPLRPLLANLQ. The segment at 9–37 is disordered; that stretch reads AGRKLAARHPHGRSRTAHNMSSSSLRKKS. A compositionally biased stretch (basic residues) spans 13–24; sequence LAARHPHGRSRT. Residues 59–79 traverse the membrane as a helical segment; it reads EVFLATKLAVLFPAVPLAIAA. Residues 80–86 are Vacuolar-facing; that stretch reads QCFRFDQ. Residues 87-107 traverse the membrane as a helical segment; the sequence is VWVFALSLLGLIPLAERVSFL. The Cytoplasmic segment spans residues 108-120; that stretch reads TEQIALYTGPTVG. Residues 121 to 141 form a helical membrane-spanning segment; it reads GLLNATCGNATELIIALFALL. The cation selection stretch occupies residues 128 to 163; that stretch reads GNATELIIALFALLKGKIEVVKCSLLGSVLSNLLLV. The Vacuolar portion of the chain corresponds to 142-153; the sequence is KGKIEVVKCSLL. The helical transmembrane segment at 154 to 174 threads the bilayer; the sequence is GSVLSNLLLVLGTSLFCGGVV. Topologically, residues 175–191 are cytoplasmic; sequence NLGARQPYDRNQSDVST. Residues 192–212 traverse the membrane as a helical segment; that stretch reads ALLFLAVLCHSAPLLLRYAVA. Over 213–228 the chain is Vacuolar; it reads AGEHSVSATSAAASLD. A helical membrane pass occupies residues 229 to 249; the sequence is LSRACSFVMLASYVAYLFFQL. Over 250–273 the chain is Cytoplasmic; that stretch reads KTHRQLFEPQEVDGGDAGDDDEEP. Residues 274-294 traverse the membrane as a helical segment; the sequence is ALGFASALFWLALMTAVISVL. The Vacuolar portion of the chain corresponds to 295–317; the sequence is SEYVVGTIEPTSQSWGLSVSFIS. A helical transmembrane segment spans residues 318-338; sequence IILLPIVGNAAEHAGAIIFAL. Residues 325 to 360 form a cation selection region; the sequence is GNAAEHAGAIIFALKNKLDITLGVALGSATQISMFV. Topologically, residues 339 to 352 are cytoplasmic; it reads KNKLDITLGVALGS. A helical membrane pass occupies residues 353–373; that stretch reads ATQISMFVVPLSVLVAWIMGV. At 374-378 the chain is on the vacuolar side; that stretch reads QMDLD. Residues 379 to 399 form a helical membrane-spanning segment; sequence FKLLETGSLFMAVLVTAFTLQ. At 400–404 the chain is on the cytoplasmic side; that stretch reads DGTSH. A helical transmembrane segment spans residues 405-425; it reads YLKGILLLLCYIVIGACFFVA. The Vacuolar segment spans residues 426–451; it reads RQPAGHANSNGALLDVPTGSMSVQAA.

Belongs to the Ca(2+):cation antiporter (CaCA) (TC 2.A.19) family. Cation/proton exchanger (CAX) subfamily. As to expression, ubiquitous.

It is found in the vacuole membrane. Its function is as follows. Vacuolar cation/proton exchanger (CAX). Translocates Ca(2+) and other metal ions into vacuoles using the proton gradient formed by H(+)-ATPase and H(+)-pyrophosphatase. This is Vacuolar cation/proton exchanger 1a (CAX1a) from Oryza sativa subsp. japonica (Rice).